A 443-amino-acid polypeptide reads, in one-letter code: MTHIQLDYGKALEFFGQHEIDQQQDIVKTIHKTIHEGTGAGSDFLGWVNLPEDYDKKEFSRIVEASKRIKSNSDVLVVIGIGGSYLGARAAIEMLTSSFRNSNEYPEIVFVGNHLSSTYTKELVDYLSDKDFSVNVISKSGTTTEPAVAFRLFKQLVEDKYGKAEAKKRIFATTDKAKGALKQLADNEGYETFVVPDDVGGRYSVLTAVGLLPIATAGINIESIMIGANKARKELSSDKLDENIAYQYATIRNILYSKGYTTEMLINYEPSMQYFNEWWKQLYGESEGKDFKGIYPSSANYTTDLHSLGQYVQEGRRFLFETVVKVNNPKHDITIEEDSDDLDGLNYLAGKTIDEVNTKAFEGTLLAHTDGGVPNVVVNIPRLDEETFGYVVYFFELACAMSGYQLGVNPFNQPGVEAYKQNMFALLGKPGFEDKKKELEERL.

Glu-285 functions as the Proton donor in the catalytic mechanism. Catalysis depends on residues His-306 and Lys-420.

This sequence belongs to the GPI family.

Its subcellular location is the cytoplasm. It catalyses the reaction alpha-D-glucose 6-phosphate = beta-D-fructose 6-phosphate. It functions in the pathway carbohydrate biosynthesis; gluconeogenesis. The protein operates within carbohydrate degradation; glycolysis; D-glyceraldehyde 3-phosphate and glycerone phosphate from D-glucose: step 2/4. Its function is as follows. Catalyzes the reversible isomerization of glucose-6-phosphate to fructose-6-phosphate. The protein is Glucose-6-phosphate isomerase of Staphylococcus haemolyticus (strain JCSC1435).